We begin with the raw amino-acid sequence, 220 residues long: N-(5'-phosphoribosyl)anthranilate isomerase (220 aa).

This sequence belongs to the TrpF family.

The enzyme catalyses N-(5-phospho-beta-D-ribosyl)anthranilate = 1-(2-carboxyphenylamino)-1-deoxy-D-ribulose 5-phosphate. The protein operates within amino-acid biosynthesis; L-tryptophan biosynthesis; L-tryptophan from chorismate: step 3/5. The protein is N-(5'-phosphoribosyl)anthranilate isomerase of Xylella fastidiosa (strain M12).